Reading from the N-terminus, the 315-residue chain is ATP synthase gamma chain (315 aa).

It belongs to the ATPase gamma chain family. As to quaternary structure, F-type ATPases have 2 components, CF(1) - the catalytic core - and CF(0) - the membrane proton channel. CF(1) has five subunits: alpha(3), beta(3), gamma(1), delta(1), epsilon(1). CF(0) has three main subunits: a, b and c.

The protein resides in the cellular thylakoid membrane. Produces ATP from ADP in the presence of a proton gradient across the membrane. The gamma chain is believed to be important in regulating ATPase activity and the flow of protons through the CF(0) complex. The sequence is that of ATP synthase gamma chain from Synechococcus sp. (strain PCC 6716).